Reading from the N-terminus, the 526-residue chain is Tyrosine-protein kinase transforming protein Src (526 aa).

A compositionally biased stretch (basic residues) spans 1-15 (MGSSKSKPKGPSQRR). The segment at 1-59 (MGSSKSKPKGPSQRRRSLEPPDSTHHGGFPASQTPNKTAAPDTHRTPSRSFGTVATEPK) is disordered. A lipid anchor (N-myristoyl glycine; by host) is attached at Gly-2. Residues 16–25 (RSLEPPDSTH) are compositionally biased toward basic and acidic residues. The 62-residue stretch at 81 to 142 (GGVTTFVALY…PSNYVAPSDS (62 aa)) folds into the SH3 domain. The SH2 domain maps to 148–245 (WYFGKITRRE…GLCHRLTNVC (98 aa)). Positions 267 to 517 (LRLEVKLGQG…TFEYLQAQLL (251 aa)) constitute a Protein kinase domain. ATP is bound by residues 273 to 281 (LGQGCFGEV) and Lys-295. The Proton acceptor role is filled by Asp-386. The residue at position 416 (Tyr-416) is a Phosphotyrosine; by autocatalysis.

The protein belongs to the protein kinase superfamily. Tyr protein kinase family. SRC subfamily. As to quaternary structure, homodimer. In terms of processing, the phosphorylated form is termed pp60v-src.

It catalyses the reaction L-tyrosyl-[protein] + ATP = O-phospho-L-tyrosyl-[protein] + ADP + H(+). Its function is as follows. This phosphoprotein, required for both the initiation and the maintenance of neoplastic transformation, is a protein kinase that catalyzes the phosphorylation of tyrosine residues in vitro. The polypeptide is Tyrosine-protein kinase transforming protein Src (V-SRC) (Rous sarcoma virus subgroup E (strain Schmidt-Ruppin) (RSV-SR-E)).